A 383-amino-acid chain; its full sequence is Chorismate synthase (383 aa).

NADP(+) contacts are provided by Arg39 and Arg45. FMN contacts are provided by residues 127–129, 249–250, Gly294, 309–313, and Arg335; these read RAS, QS, and KPIPT.

It belongs to the chorismate synthase family. As to quaternary structure, homotetramer. The cofactor is FMNH2.

The catalysed reaction is 5-O-(1-carboxyvinyl)-3-phosphoshikimate = chorismate + phosphate. It functions in the pathway metabolic intermediate biosynthesis; chorismate biosynthesis; chorismate from D-erythrose 4-phosphate and phosphoenolpyruvate: step 7/7. In terms of biological role, catalyzes the anti-1,4-elimination of the C-3 phosphate and the C-6 proR hydrogen from 5-enolpyruvylshikimate-3-phosphate (EPSP) to yield chorismate, which is the branch point compound that serves as the starting substrate for the three terminal pathways of aromatic amino acid biosynthesis. This reaction introduces a second double bond into the aromatic ring system. The protein is Chorismate synthase of Caldicellulosiruptor bescii (strain ATCC BAA-1888 / DSM 6725 / KCTC 15123 / Z-1320) (Anaerocellum thermophilum).